The chain runs to 433 residues: Enolase (433 aa).

(2R)-2-phosphoglycerate is bound at residue Q167. The Proton donor role is filled by E209. Mg(2+) is bound by residues D246, E291, and D318. 4 residues coordinate (2R)-2-phosphoglycerate: K343, R372, S373, and K394. K343 acts as the Proton acceptor in catalysis.

The protein belongs to the enolase family. Component of the RNA degradosome, a multiprotein complex involved in RNA processing and mRNA degradation. It depends on Mg(2+) as a cofactor.

Its subcellular location is the cytoplasm. It localises to the secreted. It is found in the cell surface. The catalysed reaction is (2R)-2-phosphoglycerate = phosphoenolpyruvate + H2O. It participates in carbohydrate degradation; glycolysis; pyruvate from D-glyceraldehyde 3-phosphate: step 4/5. In terms of biological role, catalyzes the reversible conversion of 2-phosphoglycerate (2-PG) into phosphoenolpyruvate (PEP). It is essential for the degradation of carbohydrates via glycolysis. The chain is Enolase from Aeromonas salmonicida (strain A449).